The chain runs to 588 residues: Intracellular maltogenic amylase (588 aa).

Residues Asn-149, Ser-155, Gly-174, and Asp-176 each coordinate Ca(2+). 2 residues coordinate substrate: His-249 and Arg-325. The active-site Nucleophile is the Asp-327. The active-site Proton donor is the Glu-356. Substrate contacts are provided by residues 422 to 423 (HD), Asp-467, and Arg-471.

Belongs to the glycosyl hydrolase 13 family. BbmA subfamily. Monomer or homodimer; in equilibrium. It depends on Ca(2+) as a cofactor.

It localises to the cytoplasm. Its function is as follows. Hydrolyzes beta-cyclodextrin to maltose and glucose, soluble starch to maltose and glucose, and pullulan to panose with trace amounts of maltose and glucose. It is also able to hydrolyze acarbose. Can also exhibit a transglycosylation activity transferring glucose or maltose to another moiety of sugars by forming alpha-(1,6)- and alpha-(1,3)-glycosidic linkages upon the hydrolysis of substrate at concentrations of 5% or higher. This is Intracellular maltogenic amylase (bbmA) from Bacillus subtilis (strain 168).